The sequence spans 437 residues: Lipid II isoglutaminyl synthase (glutamine-hydrolyzing) subunit MurT (437 aa).

Cysteine 202, cysteine 205, cysteine 224, and cysteine 226 together coordinate Zn(2+). Aspartate 349 is an active-site residue.

The protein belongs to the MurCDEF family. MurT subfamily. As to quaternary structure, forms a heterodimer with GatD.

It carries out the reaction beta-D-GlcNAc-(1-&gt;4)-Mur2Ac(oyl-L-Ala-gamma-D-Glu-L-Lys-D-Ala-D-Ala)-di-trans,octa-cis-undecaprenyl diphosphate + L-glutamine + ATP + H2O = beta-D-GlcNAc-(1-&gt;4)-Mur2Ac(oyl-L-Ala-D-isoglutaminyl-L-Lys-D-Ala-D-Ala)-di-trans,octa-cis-undecaprenyl diphosphate + L-glutamate + ADP + phosphate + H(+). It catalyses the reaction beta-D-GlcNAc-(1-&gt;4)-Mur2Ac(oyl-L-Ala-gamma-D-Glu-L-Lys-D-Ala-D-Ala)-di-trans,octa-cis-undecaprenyl diphosphate + ATP = beta-D-GlcNAc-(1-&gt;4)-Mur2Ac(oyl-L-Ala-gamma-D-O-P-Glu-L-Lys-D-Ala-D-Ala)-di-trans,octa-cis-undecaprenyl diphosphate + ADP. The catalysed reaction is beta-D-GlcNAc-(1-&gt;4)-Mur2Ac(oyl-L-Ala-gamma-D-O-P-Glu-L-Lys-D-Ala-D-Ala)-di-trans,octa-cis-undecaprenyl diphosphate + NH4(+) = beta-D-GlcNAc-(1-&gt;4)-Mur2Ac(oyl-L-Ala-D-isoglutaminyl-L-Lys-D-Ala-D-Ala)-di-trans,octa-cis-undecaprenyl diphosphate + phosphate + H(+). Its pathway is cell wall biogenesis; peptidoglycan biosynthesis. Its function is as follows. The lipid II isoglutaminyl synthase complex catalyzes the formation of alpha-D-isoglutamine in the cell wall lipid II stem peptide. The MurT subunit catalyzes the ATP-dependent amidation of D-glutamate residue of lipid II, converting it to an isoglutamine residue. The chain is Lipid II isoglutaminyl synthase (glutamine-hydrolyzing) subunit MurT from Staphylococcus aureus (strain N315).